Consider the following 207-residue polypeptide: Glycerol-3-phosphate acyltransferase (207 aa).

6 consecutive transmembrane segments (helical) span residues Asn-8 to Ala-28, Leu-64 to Ile-84, Thr-92 to Leu-112, Leu-122 to Val-142, Ser-154 to Ile-174, and Ser-176 to Val-196.

The protein belongs to the PlsY family. As to quaternary structure, probably interacts with PlsX.

The protein resides in the cell inner membrane. It catalyses the reaction an acyl phosphate + sn-glycerol 3-phosphate = a 1-acyl-sn-glycero-3-phosphate + phosphate. It participates in lipid metabolism; phospholipid metabolism. Catalyzes the transfer of an acyl group from acyl-phosphate (acyl-PO(4)) to glycerol-3-phosphate (G3P) to form lysophosphatidic acid (LPA). This enzyme utilizes acyl-phosphate as fatty acyl donor, but not acyl-CoA or acyl-ACP. This chain is Glycerol-3-phosphate acyltransferase, found in Aliarcobacter butzleri (strain RM4018) (Arcobacter butzleri).